Consider the following 239-residue polypeptide: tRNA (guanine-N(7)-)-methyltransferase (239 aa).

S-adenosyl-L-methionine-binding residues include glutamate 69, glutamate 94, aspartate 121, and aspartate 144. Residue aspartate 144 is part of the active site. Position 148 (lysine 148) interacts with substrate. Positions 150-155 (RHNKRR) are interaction with RNA. Substrate contacts are provided by residues aspartate 180 and 217–220 (TKFE).

Belongs to the class I-like SAM-binding methyltransferase superfamily. TrmB family. As to quaternary structure, monomer.

The catalysed reaction is guanosine(46) in tRNA + S-adenosyl-L-methionine = N(7)-methylguanosine(46) in tRNA + S-adenosyl-L-homocysteine. It participates in tRNA modification; N(7)-methylguanine-tRNA biosynthesis. Its function is as follows. Catalyzes the formation of N(7)-methylguanine at position 46 (m7G46) in tRNA. The sequence is that of tRNA (guanine-N(7)-)-methyltransferase from Shigella dysenteriae serotype 1 (strain Sd197).